Consider the following 374-residue polypeptide: Heptahelical transmembrane protein 5 (374 aa).

Topologically, residues 1 to 79 (MGDEAEIKEH…LSIFTIHNET (79 aa)) are cytoplasmic. The helical transmembrane segment at 80–100 (LNVWTHLIGFFLFLALTIYTA) threads the bilayer. Residues 101 to 191 (TKVPSVVDLH…LIFRPITRWP (91 aa)) lie on the Extracellular side of the membrane. A helical membrane pass occupies residues 192–212 (FYAFLGGAIFCLLASSTCHLL). Residues 213 to 228 (SCHSERVSYIMLRLDY) lie on the Cytoplasmic side of the membrane. Residues 229–249 (AGIAALIATSFYPPVYYSFMC) traverse the membrane as a helical segment. At 250 to 256 (DPFFCNL) the chain is on the extracellular side. A helical transmembrane segment spans residues 257–277 (YLGFITILGIATVLVSLLPVF). The Cytoplasmic segment spans residues 278–288 (QSLEFRVVRAS). A helical membrane pass occupies residues 289–309 (LFFGMGFSGLAPILHKLIIFW). Topologically, residues 310-313 (DQPE) are extracellular. The chain crosses the membrane as a helical span at residues 314-334 (ALHMTGYEILMGLLYGLGAVV). Topologically, residues 335–347 (YATRIPERWMPGK) are cytoplasmic. Residues 348 to 368 (FDIAGHSHQLFHVLVVAGALT) form a helical membrane-spanning segment. The Extracellular portion of the chain corresponds to 369–374 (HYRAGL).

This sequence belongs to the ADIPOR family. In terms of tissue distribution, expressed in roots, leaves, stems and flowers.

The protein resides in the membrane. May play a role in abiotic stress response. The sequence is that of Heptahelical transmembrane protein 5 (HHP5) from Arabidopsis thaliana (Mouse-ear cress).